Here is a 398-residue protein sequence, read N- to C-terminus: Nucleotide-sugar uncharacterized transporter 2 (398 aa).

Transmembrane regions (helical) follow at residues 54-74, 84-104, 119-139, 150-170, 179-199, 201-221, 242-262, 271-291, 299-319, and 322-342; these read FCGP…IILA, FNFP…LLAF, TTPF…SGLA, FYQM…FVLF, VMAL…DLEF, LFGA…KILW, FTVF…VLLF, AILI…LALG, VVLG…IFGS, and GFIS…YTWL.

It belongs to the TPT transporter family. TPT (TC 2.A.7.9) subfamily.

It localises to the membrane. This chain is Nucleotide-sugar uncharacterized transporter 2, found in Arabidopsis thaliana (Mouse-ear cress).